Reading from the N-terminus, the 168-residue chain is Transcriptional regulator MraZ (168 aa).

2 SpoVT-AbrB domains span residues 8–51 (EYNQ…GGDR) and 90–140 (ALNM…KADI).

The protein belongs to the MraZ family. In terms of assembly, forms oligomers.

The protein localises to the cytoplasm. It is found in the nucleoid. This Cereibacter sphaeroides (strain KD131 / KCTC 12085) (Rhodobacter sphaeroides) protein is Transcriptional regulator MraZ.